A 154-amino-acid chain; its full sequence is 6,7-dimethyl-8-ribityllumazine synthase (154 aa).

Residues Phe26, 60–62 (ALE), and 84–86 (CII) each bind 5-amino-6-(D-ribitylamino)uracil. (2S)-2-hydroxy-3-oxobutyl phosphate is bound at residue 89 to 90 (QT). His92 serves as the catalytic Proton donor. Asn117 contributes to the 5-amino-6-(D-ribitylamino)uracil binding site. Arg131 serves as a coordination point for (2S)-2-hydroxy-3-oxobutyl phosphate.

It belongs to the DMRL synthase family.

It catalyses the reaction (2S)-2-hydroxy-3-oxobutyl phosphate + 5-amino-6-(D-ribitylamino)uracil = 6,7-dimethyl-8-(1-D-ribityl)lumazine + phosphate + 2 H2O + H(+). Its pathway is cofactor biosynthesis; riboflavin biosynthesis; riboflavin from 2-hydroxy-3-oxobutyl phosphate and 5-amino-6-(D-ribitylamino)uracil: step 1/2. Its function is as follows. Catalyzes the formation of 6,7-dimethyl-8-ribityllumazine by condensation of 5-amino-6-(D-ribitylamino)uracil with 3,4-dihydroxy-2-butanone 4-phosphate. This is the penultimate step in the biosynthesis of riboflavin. The polypeptide is 6,7-dimethyl-8-ribityllumazine synthase (Verminephrobacter eiseniae (strain EF01-2)).